A 215-amino-acid chain; its full sequence is Probable transaldolase 1 (215 aa).

The active-site Schiff-base intermediate with substrate is the Lys83.

The protein belongs to the transaldolase family. Type 3B subfamily.

Its subcellular location is the cytoplasm. It catalyses the reaction D-sedoheptulose 7-phosphate + D-glyceraldehyde 3-phosphate = D-erythrose 4-phosphate + beta-D-fructose 6-phosphate. The protein operates within carbohydrate degradation; pentose phosphate pathway; D-glyceraldehyde 3-phosphate and beta-D-fructose 6-phosphate from D-ribose 5-phosphate and D-xylulose 5-phosphate (non-oxidative stage): step 2/3. In terms of biological role, transaldolase is important for the balance of metabolites in the pentose-phosphate pathway. The polypeptide is Probable transaldolase 1 (Bacillus cereus (strain ATCC 14579 / DSM 31 / CCUG 7414 / JCM 2152 / NBRC 15305 / NCIMB 9373 / NCTC 2599 / NRRL B-3711)).